The following is a 116-amino-acid chain: MRNSKTAISFFILVAVLGSQAGLIQEMEKEDRRYNPPIIHQGFQDTSSDCCFSYATQIPCKRFIYYFPTSGGCIKPGIIFISRRGTQVCADPSDRRVQRCLSTLKQGPRSGNKVIA.

The signal sequence occupies residues methionine 1 to alanine 21. 3 cysteine pairs are disulfide-bonded: cysteine 50–cysteine 73, cysteine 51–cysteine 89, and cysteine 60–cysteine 100.

It belongs to the intercrine beta (chemokine CC) family. Post-translationally, the N-terminal is proteolytically cleaved by proteases associated with inflammatory responses. The processed forms CL6(22-95) and CCL6(23-95) show increase in CCR1-mediated signaling and chemotaxis assays in vitro. In terms of tissue distribution, expressed in myelopoietic bone marrow cultures stimulated by GM-CSF.

The protein localises to the secreted. Functionally, chemotactic factor that attracts mostly macrophage, but it can also attract B cells, CD4(+) lymphocytes and eosinophils. The chain is C-C motif chemokine 6 (Ccl6) from Mus musculus (Mouse).